A 367-amino-acid chain; its full sequence is Chorismate synthase (367 aa).

R48 and R54 together coordinate NADP(+). Residues 125–127 (RSS), 238–239 (NA), G278, 293–297 (KPTSS), and R319 contribute to the FMN site.

This sequence belongs to the chorismate synthase family. Homotetramer. FMNH2 serves as cofactor.

It carries out the reaction 5-O-(1-carboxyvinyl)-3-phosphoshikimate = chorismate + phosphate. It participates in metabolic intermediate biosynthesis; chorismate biosynthesis; chorismate from D-erythrose 4-phosphate and phosphoenolpyruvate: step 7/7. Functionally, catalyzes the anti-1,4-elimination of the C-3 phosphate and the C-6 proR hydrogen from 5-enolpyruvylshikimate-3-phosphate (EPSP) to yield chorismate, which is the branch point compound that serves as the starting substrate for the three terminal pathways of aromatic amino acid biosynthesis. This reaction introduces a second double bond into the aromatic ring system. This Stenotrophomonas maltophilia (strain K279a) protein is Chorismate synthase.